Reading from the N-terminus, the 885-residue chain is Alanine--tRNA ligase (885 aa).

Zn(2+)-binding residues include histidine 571, histidine 575, cysteine 674, and histidine 678.

Belongs to the class-II aminoacyl-tRNA synthetase family. Zn(2+) serves as cofactor.

It localises to the cytoplasm. The enzyme catalyses tRNA(Ala) + L-alanine + ATP = L-alanyl-tRNA(Ala) + AMP + diphosphate. Its function is as follows. Catalyzes the attachment of alanine to tRNA(Ala) in a two-step reaction: alanine is first activated by ATP to form Ala-AMP and then transferred to the acceptor end of tRNA(Ala). Also edits incorrectly charged Ser-tRNA(Ala) and Gly-tRNA(Ala) via its editing domain. This chain is Alanine--tRNA ligase, found in Clavibacter michiganensis subsp. michiganensis (strain NCPPB 382).